Consider the following 226-residue polypeptide: Glutathione S-transferase-like protein gedE (226 aa).

Residues 4–85 enclose the GST N-terminal domain; it reads LLPIKVWGQG…YLVERYDTAH (82 aa). A GST C-terminal domain is found at 92–226; that stretch reads DTNDAQHARQ…VLSAVMPPPS (135 aa).

This sequence belongs to the GST superfamily.

It participates in secondary metabolite biosynthesis. Its function is as follows. Glutathione S-transferase-like protein; part of the gene cluster that mediates the biosynthesis of geodin, an intermediate in the biosynthesis of other natural products. The pathway begins with the synthesis of atrochrysone thioester by the polyketide synthase (PKS) gedC. The atrochrysone carboxyl ACP thioesterase gedB then breaks the thioester bond and releases the atrochrysone carboxylic acid from gedC. The atrochrysone carboxylic acid is then converted to atrochrysone which is further transformed into emodinanthrone. The next step is performed by the emodinanthrone oxygenase gedH that catalyzes the oxidation of emodinanthrone to emodin. Emodin O-methyltransferase encoded probably by gedA then catalyzes methylation of the 8-hydroxy group of emodin to form questin. Ring cleavage of questin by questin oxidase gedK leads to desmethylsulochrin via several intermediates including questin epoxide. Another methylation step probably catalyzed by methyltransferase gedG leads to the formation of sulochrin which is further converted to dihydrogeodin by the sulochrin halogenase gedL. Finally, the dihydrogeodin oxidase gedJ catalyzes the stereospecific phenol oxidative coupling reaction converting dihydrogeodin to geodin. The chain is Glutathione S-transferase-like protein gedE from Aspergillus terreus (strain NIH 2624 / FGSC A1156).